The sequence spans 403 residues: Argininosuccinate synthase (403 aa).

ATP contacts are provided by residues 13 to 21 and Ala40; that span reads AYSGGLDTS. L-citrulline is bound by residues Tyr92 and Ser97. Gly122 is an ATP binding site. The L-aspartate site is built by Thr124, Asn128, and Asp129. Residue Asn128 coordinates L-citrulline. 5 residues coordinate L-citrulline: Arg132, Ser181, Ser190, Glu266, and Tyr278.

The protein belongs to the argininosuccinate synthase family. Type 1 subfamily. As to quaternary structure, homotetramer.

The protein resides in the cytoplasm. It catalyses the reaction L-citrulline + L-aspartate + ATP = 2-(N(omega)-L-arginino)succinate + AMP + diphosphate + H(+). It participates in amino-acid biosynthesis; L-arginine biosynthesis; L-arginine from L-ornithine and carbamoyl phosphate: step 2/3. This is Argininosuccinate synthase from Aliivibrio fischeri (strain ATCC 700601 / ES114) (Vibrio fischeri).